We begin with the raw amino-acid sequence, 43 residues long: Delta/kappa-actitoxin-Avd4a (43 aa).

Intrachain disulfides connect Cys-4–Cys-39, Cys-6–Cys-32, and Cys-22–Cys-40.

The protein belongs to the sea anemone type 3 (BDS) potassium channel toxin family.

It localises to the secreted. It is found in the nematocyst. Acts as a gating modifier on both Kv and Nav ion channels, and also acts on blood pressure. Voltage-dependently inhibits voltage-gated potassium channels Kv3 (Kv3.1/KCNC1, Kv3.2/KCNC2 and Kv3.4/KCNC4) and slows inactivation of the voltage-gated sodium channel Nav1.7/SCN9A. Inhibits all Kv3.1, Kv3.2 and Kv3.4 by about 50% when tested at a voltage of +40 mV (45%, 48% and 56%, respectively). May act by binding residues in voltage-sensing domains S3b and S4 of Kv3. On sodium channel, tests have been done on human Nav1.7/SCN9A (expressed in HEK293 cells) (EC(50)=3 nM) and rat SCG neurons that mostly carry Nav1.7 channels (EC(50)=300 nM). This toxin also reduces blood pressure. The chain is Delta/kappa-actitoxin-Avd4a from Anemonia sulcata (Mediterranean snakelocks sea anemone).